The sequence spans 87 residues: U14-lycotoxin-Ls1a (87 aa).

A signal peptide spans 1–20; that stretch reads MNSKVFAVLLLLALLTCVLS. Residues 21–66 enclose the WAP domain; it reads EKYCPTPRNTSCKKMNIRNNCCRDSDCTSNAFCCAEPCGNFCHKAS. 5 disulfides stabilise this stretch: C24-C54, C32-C58, C41-C53, C42-C80, and C47-C62.

It belongs to the venom protein 11 family. 01 (wap-1) subfamily. In terms of processing, contains 5 disulfide bonds. As to expression, expressed by the venom gland.

It is found in the secreted. In terms of biological role, has antibacterial activity. This Lycosa singoriensis (Wolf spider) protein is U14-lycotoxin-Ls1a.